Consider the following 868-residue polypeptide: Protein translocase subunit SecA (868 aa).

ATP-binding positions include Q87, 105 to 109 (GEGKT), and D500. Zn(2+) is bound by residues C849, C851, C860, and H861.

Belongs to the SecA family. As to quaternary structure, monomer and homodimer. Part of the essential Sec protein translocation apparatus which comprises SecA, SecYEG and auxiliary proteins SecDF-YajC and YidC. Zn(2+) is required as a cofactor.

It localises to the cell membrane. Its subcellular location is the cytoplasm. It carries out the reaction ATP + H2O + cellular proteinSide 1 = ADP + phosphate + cellular proteinSide 2.. Its function is as follows. Part of the Sec protein translocase complex. Interacts with the SecYEG preprotein conducting channel. Has a central role in coupling the hydrolysis of ATP to the transfer of proteins into and across the cell membrane, serving both as a receptor for the preprotein-SecB complex and as an ATP-driven molecular motor driving the stepwise translocation of polypeptide chains across the membrane. The chain is Protein translocase subunit SecA from Wolbachia pipientis wMel.